The following is a 222-amino-acid chain: Ribonuclease 3 (222 aa).

Positions 5 to 127 (PIKLEKKLKL…LIGAIYLDKG (123 aa)) constitute an RNase III domain. Glutamate 41 contributes to the Mg(2+) binding site. The active site involves aspartate 45. Mg(2+) is bound by residues aspartate 113 and glutamate 116. Residue glutamate 116 is part of the active site. The region spanning 152–221 (DAKTKLQEYS…ASLCLQDIFK (70 aa)) is the DRBM domain.

It belongs to the ribonuclease III family. Homodimer. Requires Mg(2+) as cofactor.

Its subcellular location is the cytoplasm. The enzyme catalyses Endonucleolytic cleavage to 5'-phosphomonoester.. In terms of biological role, digests double-stranded RNA. Involved in the processing of primary rRNA transcript to yield the immediate precursors to the large and small rRNAs (23S and 16S). Processes some mRNAs, and tRNAs when they are encoded in the rRNA operon. Processes pre-crRNA and tracrRNA of type II CRISPR loci if present in the organism. This is Ribonuclease 3 from Pelagibacter ubique (strain HTCC1062).